The sequence spans 94 residues: Pyrimidine/purine nucleoside phosphorylase (94 aa).

The protein belongs to the nucleoside phosphorylase PpnP family.

It carries out the reaction a purine D-ribonucleoside + phosphate = a purine nucleobase + alpha-D-ribose 1-phosphate. It catalyses the reaction adenosine + phosphate = alpha-D-ribose 1-phosphate + adenine. The catalysed reaction is cytidine + phosphate = cytosine + alpha-D-ribose 1-phosphate. The enzyme catalyses guanosine + phosphate = alpha-D-ribose 1-phosphate + guanine. It carries out the reaction inosine + phosphate = alpha-D-ribose 1-phosphate + hypoxanthine. It catalyses the reaction thymidine + phosphate = 2-deoxy-alpha-D-ribose 1-phosphate + thymine. The catalysed reaction is uridine + phosphate = alpha-D-ribose 1-phosphate + uracil. The enzyme catalyses xanthosine + phosphate = alpha-D-ribose 1-phosphate + xanthine. Functionally, catalyzes the phosphorolysis of diverse nucleosides, yielding D-ribose 1-phosphate and the respective free bases. Can use uridine, adenosine, guanosine, cytidine, thymidine, inosine and xanthosine as substrates. Also catalyzes the reverse reactions. This Salmonella heidelberg (strain SL476) protein is Pyrimidine/purine nucleoside phosphorylase.